A 310-amino-acid polypeptide reads, in one-letter code: Transcription factor MYB53 (310 aa).

HTH myb-type domains lie at 9–61 and 62–116; these read ETGL…TNYL and RPDI…KKKL. 2 consecutive DNA-binding regions (H-T-H motif) follow at residues 37–61 and 89–112; these read WSAL…TNYL and WSMI…NTHL.

As to quaternary structure, interacts with FBX5. In terms of tissue distribution, highly expressed in roots and at lower levels in leaves, stems and flowers.

Its subcellular location is the nucleus. Its function is as follows. Probable transcription factor. In Arabidopsis thaliana (Mouse-ear cress), this protein is Transcription factor MYB53.